The following is a 190-amino-acid chain: Orotate phosphoribosyltransferase (190 aa).

5-phospho-alpha-D-ribose 1-diphosphate-binding positions include Arg-101, Lys-102, Lys-105, His-107, and 128–136 (EDVVTTGGS). Positions 132 and 160 each coordinate orotate.

The protein belongs to the purine/pyrimidine phosphoribosyltransferase family. PyrE subfamily. Homodimer. Mg(2+) is required as a cofactor.

The enzyme catalyses orotidine 5'-phosphate + diphosphate = orotate + 5-phospho-alpha-D-ribose 1-diphosphate. Its pathway is pyrimidine metabolism; UMP biosynthesis via de novo pathway; UMP from orotate: step 1/2. Catalyzes the transfer of a ribosyl phosphate group from 5-phosphoribose 1-diphosphate to orotate, leading to the formation of orotidine monophosphate (OMP). The protein is Orotate phosphoribosyltransferase of Synechococcus sp. (strain CC9605).